The following is a 487-amino-acid chain: Serralysin (487 aa).

Positions 1–16 (MQSTKKAIEITESSLA) are excised as a propeptide. Histidine 192 is a binding site for Zn(2+). Residue glutamate 193 is part of the active site. Zn(2+) is bound by residues histidine 196, histidine 202, and tyrosine 232. Residues arginine 269, glycine 271, threonine 273, aspartate 301, glycine 303, glycine 304, aspartate 306, threonine 343, glutamate 345, glycine 350, glycine 352, aspartate 354, asparagine 359, alanine 361, asparagine 363, glycine 367, glycine 368, alanine 369, glycine 370, aspartate 372, glycine 376, glycine 377, glycine 378, glycine 379, aspartate 381, glycine 385, glycine 386, alanine 387, glycine 388, aspartate 390, aspartate 399, aspartate 406, and aspartate 416 each coordinate Ca(2+). Hemolysin-type calcium-binding repeat units follow at residues 348 to 365 (IGGS…NNVL) and 366 to 383 (KGGA…ADEL).

The protein belongs to the peptidase M10B family. Ca(2+) serves as cofactor. It depends on Zn(2+) as a cofactor.

It is found in the secreted. The enzyme catalyses Preferential cleavage of bonds with hydrophobic residues in P1'.. Has insecticidal activity against the locust M.palpalis. When administered orally to locusts at a low dose it causes them to lie on their sides exhibiting sporadic limb movements and muscular twitching, followed by full recovery. When administered at higher doses the same symptoms are observed, followed by death. The sequence is that of Serralysin from Serratia marcescens.